Consider the following 337-residue polypeptide: MPIRHCIVHLIEKKPDGSPAVLHARDSELAESQALENLLVDLNDSYNAKQGKAWGLFQEESGAYPFSGWLGAYLEGARDFAAFSRQAVEHLKTLMEESNLSSGGHVLFAHYQQGMTEYLAIALLHHSEGVTVTETLEVAPAKHLDLAQLHLAARINLSEWRNNRQSKQYISFIKGKNGKKVSDYFRDFIGCREGVDAPGETRTLLKAFSDFVESEDLAEEEAREKTSALVDYASTQARLGAPIALEELSGLIDEERPRAFYEHIRNKDYGLSPEIPPDKRTLNQFRRFTGRAEGLSISFEAHLLGSRVEYDEEHDTLTIRQVPSQLKDQLKRRKDGQ.

The protein belongs to the YejK family.

The protein localises to the cytoplasm. Its subcellular location is the nucleoid. The protein is Nucleoid-associated protein Avin_11450 of Azotobacter vinelandii (strain DJ / ATCC BAA-1303).